Here is a 247-residue protein sequence, read N- to C-terminus: ATP synthase subunit a, chloroplastic (247 aa).

5 helical membrane passes run glutamine 38–valine 58, valine 95–leucine 115, isoleucine 134–serine 154, leucine 199–leucine 219, and glycine 220–glycine 240.

It belongs to the ATPase A chain family. F-type ATPases have 2 components, CF(1) - the catalytic core - and CF(0) - the membrane proton channel. CF(1) has five subunits: alpha(3), beta(3), gamma(1), delta(1), epsilon(1). CF(0) has four main subunits: a, b, b' and c.

It localises to the plastid. The protein resides in the chloroplast thylakoid membrane. Functionally, key component of the proton channel; it plays a direct role in the translocation of protons across the membrane. The protein is ATP synthase subunit a, chloroplastic of Oryza nivara (Indian wild rice).